A 302-amino-acid polypeptide reads, in one-letter code: ATP synthase gamma chain (302 aa).

Belongs to the ATPase gamma chain family. As to quaternary structure, F-type ATPases have 2 components, CF(1) - the catalytic core - and CF(0) - the membrane proton channel. CF(1) has five subunits: alpha(3), beta(3), gamma(1), delta(1), epsilon(1). CF(0) has three main subunits: a, b and c.

It is found in the cell membrane. Its function is as follows. Produces ATP from ADP in the presence of a proton gradient across the membrane. The gamma chain is believed to be important in regulating ATPase activity and the flow of protons through the CF(0) complex. This is ATP synthase gamma chain from Kineococcus radiotolerans (strain ATCC BAA-149 / DSM 14245 / SRS30216).